Reading from the N-terminus, the 129-residue chain is MKEDRRSAPLFPIGIVMDLTQLSARQIRYYEEHNLVSPTRTKGNRRLFSFNDVDKLLEIKDLLDQGLNMAGIKQVLLMKENQTEAVKVKEETKEISKTELRKILRDELQHTGRFNRTSLRQGDISRFFH.

Residues leucine 10–methionine 78 form the HTH merR-type domain. The segment at residues isoleucine 13 to glutamate 32 is a DNA-binding region (H-T-H motif).

Homodimer under conditions of nitrogen excess. Monomer under conditions of nitrogen-limited. Interacts with feedback-inhibited GlnA in order to stabilizes GlnR-DNA complex.

Its activity is regulated as follows. Under conditions of nitrogen excess, the DNA binding activity of GlnR is activated by a transient interaction with feedback-inhibited GlnA. Under conditions of nitrogen-limited, GlnR is autoinhibited by its C-terminal region. Transcription repressor during nitrogen excess. On the contrary of the MerR members, which require longer DNA sites for high-affinity binding, GlnR requires a DNA sequence of 17 nucleotides as minimal binding site. The chain is HTH-type transcriptional regulator GlnR from Bacillus anthracis.